A 147-amino-acid chain; its full sequence is UPF0306 protein YhbP (147 aa).

This sequence belongs to the UPF0306 family.

This Salmonella schwarzengrund (strain CVM19633) protein is UPF0306 protein YhbP.